The following is a 161-amino-acid chain: Type II secretion system protein M (161 aa).

Residues 1 to 16 are Cytoplasmic-facing; the sequence is MNELRRRWQVMSQRER. Residues 17-37 form a helical membrane-spanning segment; that stretch reads LMALACGGLVVLCLLYYLIWA. Over 38–161 the chain is Periplasmic; it reads PWQESVRQWQ…VTRLSLERVL (124 aa).

The protein belongs to the GSP M family. In terms of assembly, type II secretion system is composed of four main components: the outer membrane complex, the inner membrane complex, the cytoplasmic secretion ATPase and the periplasm-spanning pseudopilus. Forms homodimers. Interacts with OutL/GspL. Interacts with OutE/GspE and OutF/GspF.

It is found in the cell inner membrane. In terms of biological role, inner membrane component of the type II secretion system required for the energy-dependent secretion of extracellular factors such as proteases and toxins from the periplasm. Plays a role in the complex assembly and recruits OutL resulting in a stable complex in the inner membrane. Provides thus a link between the energy-providing OutE protein in the cytoplasm and the rest of the T2SS machinery. In Dickeya chrysanthemi (Pectobacterium chrysanthemi), this protein is Type II secretion system protein M (outM).